The sequence spans 440 residues: Chromosome partition protein MukF (440 aa).

The segment at 208 to 236 is leucine-zipper; that stretch reads LSETSGTLRELQDTLEAAGDKLQANLLRI.

This sequence belongs to the MukF family. As to quaternary structure, interacts, and probably forms a ternary complex, with MukE and MukB via its C-terminal region. The complex formation is stimulated by calcium or magnesium. It is required for an interaction between MukE and MukB.

The protein localises to the cytoplasm. It is found in the nucleoid. Involved in chromosome condensation, segregation and cell cycle progression. May participate in facilitating chromosome segregation by condensation DNA from both sides of a centrally located replisome during cell division. Not required for mini-F plasmid partitioning. Probably acts via its interaction with MukB and MukE. Overexpression results in anucleate cells. It has a calcium binding activity. This chain is Chromosome partition protein MukF, found in Salmonella agona (strain SL483).